We begin with the raw amino-acid sequence, 386 residues long: Methylthioribose-1-phosphate isomerase (386 aa).

Aspartate 261 (proton donor) is an active-site residue.

The protein belongs to the eIF-2B alpha/beta/delta subunits family. MtnA subfamily.

It localises to the cytoplasm. It is found in the nucleus. It carries out the reaction 5-(methylsulfanyl)-alpha-D-ribose 1-phosphate = 5-(methylsulfanyl)-D-ribulose 1-phosphate. The protein operates within amino-acid biosynthesis; L-methionine biosynthesis via salvage pathway; L-methionine from S-methyl-5-thio-alpha-D-ribose 1-phosphate: step 1/6. In terms of biological role, catalyzes the interconversion of methylthioribose-1-phosphate (MTR-1-P) into methylthioribulose-1-phosphate (MTRu-1-P). The protein is Methylthioribose-1-phosphate isomerase of Paracoccidioides brasiliensis (strain Pb03).